Consider the following 135-residue polypeptide: Large-conductance mechanosensitive channel (135 aa).

Transmembrane regions (helical) follow at residues 10-30 and 76-96; these read FAMRGNVIDMAVGVVIGGAFG and GSFIQTMVDFLIIAFCIFCVI.

Belongs to the MscL family. As to quaternary structure, homopentamer.

The protein localises to the cell inner membrane. Channel that opens in response to stretch forces in the membrane lipid bilayer. May participate in the regulation of osmotic pressure changes within the cell. This chain is Large-conductance mechanosensitive channel, found in Campylobacter concisus (strain 13826).